The chain runs to 434 residues: Methylenetetrahydrofolate--tRNA-(uracil-5-)-methyltransferase TrmFO (434 aa).

FAD is bound at residue 10–15; sequence GAGLAG.

Belongs to the MnmG family. TrmFO subfamily. The cofactor is FAD.

It is found in the cytoplasm. The catalysed reaction is uridine(54) in tRNA + (6R)-5,10-methylene-5,6,7,8-tetrahydrofolate + NADH + H(+) = 5-methyluridine(54) in tRNA + (6S)-5,6,7,8-tetrahydrofolate + NAD(+). It catalyses the reaction uridine(54) in tRNA + (6R)-5,10-methylene-5,6,7,8-tetrahydrofolate + NADPH + H(+) = 5-methyluridine(54) in tRNA + (6S)-5,6,7,8-tetrahydrofolate + NADP(+). In terms of biological role, catalyzes the folate-dependent formation of 5-methyl-uridine at position 54 (M-5-U54) in all tRNAs. In Bacillus mycoides (strain KBAB4) (Bacillus weihenstephanensis), this protein is Methylenetetrahydrofolate--tRNA-(uracil-5-)-methyltransferase TrmFO.